A 298-amino-acid polypeptide reads, in one-letter code: Glutamyl-Q tRNA(Asp) synthetase (298 aa).

L-glutamate contacts are provided by residues 9–13 and glutamate 45; that span reads RFAPS. Residues 12–22 carry the 'HIGH' region motif; sequence PSPSGELHFGS. Zn(2+) is bound by residues cysteine 101, cysteine 103, tyrosine 115, and cysteine 119. Residues tyrosine 172 and arginine 190 each contribute to the L-glutamate site. Positions 228–232 match the 'KMSKS' region motif; it reads KLSKQ. Lysine 231 provides a ligand contact to ATP.

It belongs to the class-I aminoacyl-tRNA synthetase family. GluQ subfamily. It depends on Zn(2+) as a cofactor.

Its function is as follows. Catalyzes the tRNA-independent activation of glutamate in presence of ATP and the subsequent transfer of glutamate onto a tRNA(Asp). Glutamate is transferred on the 2-amino-5-(4,5-dihydroxy-2-cyclopenten-1-yl) moiety of the queuosine in the wobble position of the QUC anticodon. The sequence is that of Glutamyl-Q tRNA(Asp) synthetase from Citrobacter koseri (strain ATCC BAA-895 / CDC 4225-83 / SGSC4696).